The primary structure comprises 516 residues: Histidine ammonia-lyase (516 aa).

The 5-imidazolinone (Ala-Gly) cross-link spans 143 to 145 (ASG). A 2,3-didehydroalanine (Ser) modification is found at Ser144.

This sequence belongs to the PAL/histidase family. Post-translationally, contains an active site 4-methylidene-imidazol-5-one (MIO), which is formed autocatalytically by cyclization and dehydration of residues Ala-Ser-Gly.

It is found in the cytoplasm. It carries out the reaction L-histidine = trans-urocanate + NH4(+). Its pathway is amino-acid degradation; L-histidine degradation into L-glutamate; N-formimidoyl-L-glutamate from L-histidine: step 1/3. The polypeptide is Histidine ammonia-lyase (Koribacter versatilis (strain Ellin345)).